The primary structure comprises 468 residues: MTKTLPKDFIFGGATAAYQAEGATHTDGKGPVAWDKYLEDNYWYTAEPASDFYHKYPVDLALAEEYGVNGIRISIAWSRIFPTGYGEVNLKGVEFYHKLFEECHKRHVEPFVTLHHFDTPEALHSNGDFLNRDNIEHFVNYAAFCFEEFPEVNYWTTFNEIGPIGDGQYLVGKFPPGIQYDLAKVFQSHHNMMVSHARAVKLYKDKGYKGEIGVVHALPTKYPLDPENSADVRAAELEDIIHNKFILDATYLGYYSEMTMAGVKHILKENGGELDLREEDFQALEAAKDLNDFLGINYYMSDWMQAFDGETEIIHNGKGEKGSSKYQIKGVGRRVAPDYVPKTDWDWIIYPQGLYDQIMRVKNDYPNYKKIYITENGLGYKDEFVDNTVYDDGRIDYVKQHLEVLSEAISDGANVKGYFIWSLMDVFSWSNGYEKRYGLFYVDFETQERYPKKSAHWYKQVAKTQIIE.

D-galactose 6-phosphate contacts are provided by Gln19, His116, Asn159, Glu160, and Asn297. Residue Glu160 is the Proton donor of the active site. Glu375 serves as the catalytic Nucleophile. D-galactose 6-phosphate-binding residues include Ser428, Trp429, Lys435, and Tyr437.

Belongs to the glycosyl hydrolase 1 family.

It catalyses the reaction a 6-phospho-beta-D-galactoside + H2O = D-galactose 6-phosphate + an alcohol. It functions in the pathway carbohydrate metabolism; lactose degradation; D-galactose 6-phosphate and beta-D-glucose from lactose 6-phosphate: step 1/1. The sequence is that of 6-phospho-beta-galactosidase from Streptococcus agalactiae serotype III (strain NEM316).